The sequence spans 371 residues: Anhydro-N-acetylmuramic acid kinase (371 aa).

Residue 9–16 (GTSMDGID) coordinates ATP.

The protein belongs to the anhydro-N-acetylmuramic acid kinase family.

The catalysed reaction is 1,6-anhydro-N-acetyl-beta-muramate + ATP + H2O = N-acetyl-D-muramate 6-phosphate + ADP + H(+). It participates in amino-sugar metabolism; 1,6-anhydro-N-acetylmuramate degradation. The protein operates within cell wall biogenesis; peptidoglycan recycling. In terms of biological role, catalyzes the specific phosphorylation of 1,6-anhydro-N-acetylmuramic acid (anhMurNAc) with the simultaneous cleavage of the 1,6-anhydro ring, generating MurNAc-6-P. Is required for the utilization of anhMurNAc either imported from the medium or derived from its own cell wall murein, and thus plays a role in cell wall recycling. In Azorhizobium caulinodans (strain ATCC 43989 / DSM 5975 / JCM 20966 / LMG 6465 / NBRC 14845 / NCIMB 13405 / ORS 571), this protein is Anhydro-N-acetylmuramic acid kinase.